The chain runs to 43 residues: Protein PsbN (43 aa).

A helical transmembrane segment spans residues 7–27 (LIVAIAAVTICITAFAIYTAF).

It belongs to the PsbN family.

It is found in the cellular thylakoid membrane. Functionally, may play a role in photosystem I and II biogenesis. This is Protein PsbN from Synechococcus sp. (strain JA-2-3B'a(2-13)) (Cyanobacteria bacterium Yellowstone B-Prime).